The primary structure comprises 293 residues: Rhomboid-like protease 1 (293 aa).

Residues 18 to 40 are disordered; that stretch reads EHTPLYNAETGSRDSDSTSSGGA. Helical transmembrane passes span 62-82, 112-132, 148-168, 174-194, 217-237, and 262-282; these read VVLA…CLDT, LLLP…VFFQ, FTGL…TAFF, VGAS…MALT, LLMF…GGLL, and AAAI…LYAV. Ser-177 (nucleophile) is an active-site residue. His-232 is a catalytic residue.

It belongs to the peptidase S54 family.

The protein resides in the cytoplasmic vesicle. It localises to the secretory vesicle. The protein localises to the microneme membrane. It carries out the reaction Cleaves type-1 transmembrane domains using a catalytic dyad composed of serine and histidine that are contributed by different transmembrane domains.. Its function is as follows. Serine protease involved in intramembrane proteolysis and the subsequent release of polypeptides from their membrane anchors. Has no detectable activity towards MIC2. The chain is Rhomboid-like protease 1 (ROM1) from Toxoplasma gondii.